The sequence spans 497 residues: Di-/tripeptide transporter (497 aa).

Over 1-36 (MQNLNKTEKTFFGQPRGLLTLFQTEFWERFSYYGMR) the chain is Cytoplasmic. The helical transmembrane segment at 37–55 (AILVYYLYALTTADNAGLG) threads the bilayer. Over 56–64 (LPKAQAMAI) the chain is Extracellular. A helical transmembrane segment spans residues 65–83 (VSIYGALVYLSTIVGGWVA). The Cytoplasmic portion of the chain corresponds to 84-92 (DRLLGASRT). The chain crosses the membrane as a helical span at residues 93–111 (IFLGGILITLGHIALATPF). The Extracellular portion of the chain corresponds to 112 to 115 (GLSS). A helical transmembrane segment spans residues 116 to 134 (LFVALFLIILGTGMLKPNI). Topologically, residues 135–154 (SNMVGHLYSKDDSRRDTGFN) are cytoplasmic. Residues 155-173 (IFVVGINMGSLIAPLIVGT) form a helical membrane-spanning segment. The Extracellular portion of the chain corresponds to 174 to 181 (VGQGVNYH). The helical transmembrane segment at 182–200 (LGFSLAAIGMIFALFAYWY) threads the bilayer. Residues 201 to 224 (GRLRHFPEIGREPSNPMDSKARRN) are Cytoplasmic-facing. Residues 225–243 (FLITLTIVVIVAIIGFFLL) traverse the membrane as a helical segment. The Extracellular portion of the chain corresponds to 244–254 (YQASPANFINN). Residues 255-273 (FINVLSIIGIVVPIIYFVM) form a helical membrane-spanning segment. Residues 274-293 (MFTSKKVESDERRKLTAYIP) are Cytoplasmic-facing. A helical membrane pass occupies residues 294–312 (LFLSAIVFWAIEEQSSTII). Over 313–335 (AVWGESRSNLDPTWFGITFHIDP) the chain is Extracellular. The chain crosses the membrane as a helical span at residues 336–354 (SWYQLLNPLFIVLLSPIFV). The Cytoplasmic portion of the chain corresponds to 355 to 372 (RLWNKLGERQPSTIVKFG). A helical membrane pass occupies residues 373–391 (LGLMLTGISYLIMTLPGLL). Over 392–425 (NGTSGRASALWLVLMFAVQMAGELLVSPVGLSVS) the chain is Extracellular. A helical transmembrane segment spans residues 426 to 444 (TKLAPVAFQSQMMAMWFLA). Residues 445-497 (DSTSQAINAQITPLFKAATEVHFFAITGIIGIIVGIILLIVKKPILKLMGDVR) lie on the Cytoplasmic side of the membrane.

This sequence belongs to the major facilitator superfamily. Proton-dependent oligopeptide transporter (POT/PTR) (TC 2.A.17) family.

The protein resides in the cell membrane. Proton-dependent uptake of di- or tri-peptides. In Lactococcus lactis subsp. lactis (strain IL1403) (Streptococcus lactis), this protein is Di-/tripeptide transporter (dtpT).